A 299-amino-acid polypeptide reads, in one-letter code: Regucalcin (299 aa).

Position 18 (Glu-18) interacts with a divalent metal cation. The substrate site is built by Arg-101, Asn-103, and Glu-121. Residues Asn-154 and Asp-204 each contribute to the a divalent metal cation site. The Proton donor/acceptor role is filled by Asp-204.

This sequence belongs to the SMP-30/CGR1 family. Requires Zn(2+) as cofactor. The cofactor is Mn(2+). Ca(2+) serves as cofactor. Mg(2+) is required as a cofactor. In terms of tissue distribution, expressed in the liver, and in the pronephros from the late tadpole stage.

It is found in the cytoplasm. It carries out the reaction D-glucono-1,5-lactone + H2O = D-gluconate + H(+). Its pathway is cofactor biosynthesis; L-ascorbate biosynthesis via UDP-alpha-D-glucuronate pathway; L-ascorbate from UDP-alpha-D-glucuronate: step 3/4. Its function is as follows. Gluconolactonase with low activity towards other sugar lactones, including gulonolactone and galactonolactone. Catalyzes a key step in ascorbic acid (vitamin C) biosynthesis. Can also hydrolyze diisopropyl phosphorofluoridate and phenylacetate (in vitro). Calcium-binding protein. Modulates Ca(2+) signaling, and Ca(2+)-dependent cellular processes and enzyme activities. The chain is Regucalcin from Xenopus laevis (African clawed frog).